The following is an 867-amino-acid chain: KH domain-containing protein akap-1 (867 aa).

Residues 108–128 form a helical membrane-spanning segment; the sequence is HALLIALGGFSIAALFVWYIN. 2 disordered regions span residues 145–458 and 481–523; these read SNGL…QKRV and HENA…GLTT. Over residues 152–162 the composition is skewed to polar residues; sequence ATASDVQTENG. 4 stretches are compositionally biased toward basic and acidic residues: residues 186 to 211, 218 to 239, 247 to 275, and 298 to 307; these read QQKDEDEKTQKKDAVQNEKPSIDKKQ, TEKKEEKTVEIHTETEETDHVA, SEHKEHDKKTKQKNDEPVSIDKKSEEIEV, and QFVKKEEPKL. A compositionally biased stretch (polar residues) spans 336–345; sequence TKMNDATSPL. The segment covering 363 to 383 has biased composition (basic and acidic residues); sequence EMEKSFNEEEFRLNESSDIDR. Over residues 397–408 the composition is skewed to basic residues; the sequence is NKNRSSQKRKGG. Basic and acidic residues-rich tracts occupy residues 441-458 and 481-490; these read LTKEKSVEETPEKSQKRV and HENASYEKSD. Residues 494–507 show a composition bias toward polar residues; it reads LDSQNSEASSQDSG. The region spanning 528 to 595 is the KH domain; that stretch reads LPMYEFEIPN…DEINHCLQML (68 aa). Residues 689–747 enclose the Tudor domain; sequence PCQNGLLCAAPVGNAWFRAVTVQYFDETDEVFVKFVDYGGYSKMARQDLRQIRTDLMSL.

The protein resides in the membrane. The chain is KH domain-containing protein akap-1 from Caenorhabditis elegans.